The chain runs to 709 residues: Threonine--tRNA ligase, mitochondrial 1 (709 aa).

A mitochondrion-targeting transit peptide spans 1-21 (MLLRLTARSIRRFTTSSSSLP). The TGS domain occupies 73 to 135 (DPIKVTLPDG…EGDCKLELFK (63 aa)). Cys407, His458, and His584 together coordinate Zn(2+).

It belongs to the class-II aminoacyl-tRNA synthetase family.

The protein resides in the mitochondrion. It is found in the cytoplasm. It localises to the cytosol. It carries out the reaction tRNA(Thr) + L-threonine + ATP = L-threonyl-tRNA(Thr) + AMP + diphosphate + H(+). This chain is Threonine--tRNA ligase, mitochondrial 1, found in Arabidopsis thaliana (Mouse-ear cress).